We begin with the raw amino-acid sequence, 1310 residues long: Cadherin-related family member 2 (1310 aa).

Residues Met1–Ala20 form the signal peptide. Topologically, residues Asn21–Ser1154 are extracellular. 3 consecutive Cadherin domains span residues Leu27–Phe124, Gln125–Phe241, and Val242–Phe353. N-linked (GlcNAc...) asparagine glycosylation is found at Asn29, Asn134, Asn182, Asn188, Asn195, Asn300, Asn355, Asn371, Asn401, Asn460, Asn565, Asn600, Asn616, Asn632, Asn680, Asn696, Asn701, Asn775, Asn821, Asn871, Asn877, Asn911, Asn932, and Asn1107. Cadherin domains lie at Ala368–Phe480, Pro481–Val586, Val586–Phe695, Asn696–Leu808, Val810–Phe928, and Pro930–Glu1058. Residues Val1155–Val1175 form a helical membrane-spanning segment. Topologically, residues Cys1176–Leu1310 are cytoplasmic. A mediates interaction with USH1C and MYO7B and is required for proper localization to microvilli tips and function in microvilli organization region spans residues Ser1180–Leu1310. Residue Ser1248 is modified to Phosphoserine. The span at Asn1259–Pro1268 shows a compositional bias: basic and acidic residues. A disordered region spans residues Asn1259 to Leu1310. Ser1299 is modified (phosphoserine). Positions Ser1299 to Leu1310 are enriched in polar residues.

As to quaternary structure, part of the IMAC/intermicrovillar adhesion complex/intermicrovillar tip-link complex composed of ANKS4B, MYO7B, USH1C, CDHR2 and CDHR5. Interacts with MAST2. Interacts (via cytoplasmic domain) with USH1C and MYO7B; required for proper localization of CDHR2 to microvilli tips and its function in brush border differentiation. Highly expressed in liver, kidney and colon. Moderately expressed in small intestine. Down-regulated in a number of liver and colon cancers. Expressed in duodenum with higher expression in enterocytes along the villus axis and lower expression in crypts (at protein level).

The protein localises to the apical cell membrane. Its subcellular location is the cell projection. It localises to the microvillus membrane. It is found in the cell junction. Functionally, intermicrovillar adhesion molecule that forms, via its extracellular domain, calcium-dependent heterophilic complexes with CDHR5 on adjacent microvilli. Thereby, controls the packing of microvilli at the apical membrane of epithelial cells. Through its cytoplasmic domain, interacts with microvillus cytoplasmic proteins to form the intermicrovillar adhesion complex/IMAC. This complex plays a central role in microvilli and epithelial brush border differentiation. May also play a role in cell-cell adhesion and contact inhibition in epithelial cells. In Homo sapiens (Human), this protein is Cadherin-related family member 2.